The primary structure comprises 265 residues: MNIAIAGASGRMGRMLIEQVLNTEGVSLAGALDVPGSPALGQDAGLLLGRQTGVAISSDVEAVLAGADCLIDFTRPEGTLAHVAAAKKLGVKMVIGTTGFDEAGKAALAEAARSIGIVFAANFSVGVNATFKLLEVAARLLSTGYDIEVIEAHHRFKVDAPSGTALKMGEVIADALGRDLKTCAVYAREGHTGERNPNSIGFATVRGGDIVGDHTVMFAGIGERIEISHKSSSRQSYADGAVRAARFLADKPNGLFDMQDVLGLK.

NAD(+)-binding positions include 7-12, aspartate 33, 96-98, and 120-123; these read GASGRM, GTT, and AANF. Histidine 153 functions as the Proton donor/acceptor in the catalytic mechanism. Residue histidine 154 coordinates (S)-2,3,4,5-tetrahydrodipicolinate. The active-site Proton donor is the lysine 157. 163-164 contacts (S)-2,3,4,5-tetrahydrodipicolinate; sequence GT.

This sequence belongs to the DapB family.

It is found in the cytoplasm. It carries out the reaction (S)-2,3,4,5-tetrahydrodipicolinate + NAD(+) + H2O = (2S,4S)-4-hydroxy-2,3,4,5-tetrahydrodipicolinate + NADH + H(+). The enzyme catalyses (S)-2,3,4,5-tetrahydrodipicolinate + NADP(+) + H2O = (2S,4S)-4-hydroxy-2,3,4,5-tetrahydrodipicolinate + NADPH + H(+). It functions in the pathway amino-acid biosynthesis; L-lysine biosynthesis via DAP pathway; (S)-tetrahydrodipicolinate from L-aspartate: step 4/4. Its function is as follows. Catalyzes the conversion of 4-hydroxy-tetrahydrodipicolinate (HTPA) to tetrahydrodipicolinate. The chain is 4-hydroxy-tetrahydrodipicolinate reductase from Cupriavidus necator (strain ATCC 17699 / DSM 428 / KCTC 22496 / NCIMB 10442 / H16 / Stanier 337) (Ralstonia eutropha).